The sequence spans 310 residues: Aspartate carbamoyltransferase catalytic subunit (310 aa).

The carbamoyl phosphate site is built by Arg-59 and Thr-60. Position 87 (Lys-87) interacts with L-aspartate. The carbamoyl phosphate site is built by Arg-109, His-139, and Gln-142. Residues Arg-172 and Arg-224 each contribute to the L-aspartate site. 2 residues coordinate carbamoyl phosphate: Ala-265 and Pro-266.

This sequence belongs to the aspartate/ornithine carbamoyltransferase superfamily. ATCase family. As to quaternary structure, heterododecamer (2C3:3R2) of six catalytic PyrB chains organized as two trimers (C3), and six regulatory PyrI chains organized as three dimers (R2).

The catalysed reaction is carbamoyl phosphate + L-aspartate = N-carbamoyl-L-aspartate + phosphate + H(+). It functions in the pathway pyrimidine metabolism; UMP biosynthesis via de novo pathway; (S)-dihydroorotate from bicarbonate: step 2/3. Catalyzes the condensation of carbamoyl phosphate and aspartate to form carbamoyl aspartate and inorganic phosphate, the committed step in the de novo pyrimidine nucleotide biosynthesis pathway. The sequence is that of Aspartate carbamoyltransferase catalytic subunit from Lactococcus lactis subsp. cremoris (strain MG1363).